A 167-amino-acid polypeptide reads, in one-letter code: Transmembrane protein 229B (167 aa).

The Cytoplasmic segment spans residues 1-14 (MASAEPLTALSRWY). The chain crosses the membrane as a helical span at residues 15–35 (LYAIHGYFCEVMFTAAWEFVV). Topologically, residues 36 to 40 (NFNWK) are extracellular. Residues 41 to 61 (FPGVTSVWALFIYGTSILIVE) traverse the membrane as a helical segment. At 62 to 73 (RMYLRLRGRCPL) the chain is on the cytoplasmic side. A helical transmembrane segment spans residues 74 to 94 (LVRCVIYTLWTYLWEFTTGFI). Residues 95–109 (LRQFNACPWDYSQFD) are Extracellular-facing. A helical transmembrane segment spans residues 110–130 (FDFMGLITLEYAVPWFCGALI). The Cytoplasmic portion of the chain corresponds to 131–167 (MEQFIIRNTLRLRFDKDAEPGEPASPPALANGHVKTD). A disordered region spans residues 148 to 167 (AEPGEPASPPALANGHVKTD).

This sequence belongs to the TMEM229 family.

It is found in the membrane. The chain is Transmembrane protein 229B (TMEM229B) from Mus musculus (Mouse).